A 271-amino-acid chain; its full sequence is CAAX prenyl protease 2 (271 aa).

Residues 1-9 (MISSYKYNP) lie on the Extracellular side of the membrane. Residues 10-30 (KLYFLSTFVVTYILWFTGAYL) traverse the membrane as a helical segment. The Cytoplasmic segment spans residues 31-38 (SFSSTYSG). The chain crosses the membrane as a helical span at residues 39–59 (IYMLIMLPGLMAPFIISTILI). The Extracellular segment spans residues 60–82 (AKSKNNELKKDFINRLFNLKLIN). A helical membrane pass occupies residues 83–105 (LKTIPVVFLLMPAVILLSILLSI). The Cytoplasmic segment spans residues 106-125 (PFGGSISQFQFSGGFSFSTD). The helical transmembrane segment at 126–149 (FVPVLFLLLLAATFEELGWRGYAF) threads the bilayer. E140 acts as the Proton donor/acceptor in catalysis. The Extracellular segment spans residues 150–159 (DSLQSRYSLF). Residues 160–179 (KASILFGIFWSLWHFPLIFV) form a helical membrane-spanning segment. Residue H173 is the Proton donor/acceptor of the active site. Topologically, residues 180-192 (NNSYQYEIFNQSI) are cytoplasmic. The helical transmembrane segment at 193–213 (WYGLNFFLSILPMGIIITWMC) threads the bilayer. The Extracellular segment spans residues 214 to 219 (LKNRKS). A helical membrane pass occupies residues 220–237 (IILAIIFHFLINLNQELL). Topologically, residues 238-243 (AITQDT) are cytoplasmic. A helical transmembrane segment spans residues 244–263 (KIIETGVLFLVAAAIILYDK). The Extracellular segment spans residues 264–271 (KMFFEKLG).

It belongs to the peptidase U48 family.

The protein resides in the cell membrane. The catalysed reaction is Hydrolyzes the peptide bond -P2-(S-farnesyl or geranylgeranyl)C-P1'-P2'-P3'-COOH where P1' and P2' are amino acids with aliphatic sidechains and P3' is any C-terminal residue.. With respect to regulation, activity is unaffected by metalloprotease inhibitors 5 mM EDTA and 5 mM Zn(2+). Activity partially inhibited by 1,10-phenanthroline and 1,7-phenanthroline. Protease involved in the processing of a variety of prenylated proteins containing the C-terminal CAAX motif, where C is a cysteine modified with an isoprenoid lipid, A is an aliphatic amino acid and X is any C-terminal amino acid. Proteolytically removes the C-terminal three residues of farnesylated proteins, leaving the prenylated cysteine as the new C-terminus. Hydrolysis depends on a farnesylated cysteine residue and no activity is shown towards geranylgeranylated peptides. This is CAAX prenyl protease 2 from Methanococcus maripaludis (strain DSM 14266 / JCM 13030 / NBRC 101832 / S2 / LL).